Consider the following 212-residue polypeptide: Pyridoxine/pyridoxamine 5'-phosphate oxidase (212 aa).

FMN-binding positions include arginine 61 to lysine 66, tyrosine 76 to threonine 77, lysine 83, and glutamine 105. A substrate-binding site is contributed by lysine 66. Substrate-binding residues include tyrosine 123, arginine 127, and serine 131. FMN is bound by residues glutamine 140–serine 141 and tryptophan 185. Arginine 191–histidine 193 contacts substrate. Position 195 (arginine 195) interacts with FMN.

This sequence belongs to the pyridoxamine 5'-phosphate oxidase family. Homodimer. FMN is required as a cofactor.

It catalyses the reaction pyridoxamine 5'-phosphate + O2 + H2O = pyridoxal 5'-phosphate + H2O2 + NH4(+). The enzyme catalyses pyridoxine 5'-phosphate + O2 = pyridoxal 5'-phosphate + H2O2. Its pathway is cofactor metabolism; pyridoxal 5'-phosphate salvage; pyridoxal 5'-phosphate from pyridoxamine 5'-phosphate: step 1/1. It functions in the pathway cofactor metabolism; pyridoxal 5'-phosphate salvage; pyridoxal 5'-phosphate from pyridoxine 5'-phosphate: step 1/1. In terms of biological role, catalyzes the oxidation of either pyridoxine 5'-phosphate (PNP) or pyridoxamine 5'-phosphate (PMP) into pyridoxal 5'-phosphate (PLP). The protein is Pyridoxine/pyridoxamine 5'-phosphate oxidase of Dichelobacter nodosus (strain VCS1703A).